The chain runs to 239 residues: Ribonuclease 3 (239 aa).

The region spanning 11–133 is the RNase III domain; the sequence is HAAIQKKLGY…MFAAVSFDAD (123 aa). Glu-46 serves as a coordination point for Mg(2+). Asp-50 is a catalytic residue. Asp-119 and Glu-122 together coordinate Mg(2+). The active site involves Glu-122. One can recognise a DRBM domain in the interval 160–230; it reads DGKTALQEAL…AKEALKWLEE (71 aa).

Belongs to the ribonuclease III family. In terms of assembly, homodimer. The cofactor is Mg(2+).

The protein localises to the cytoplasm. The catalysed reaction is Endonucleolytic cleavage to 5'-phosphomonoester.. Functionally, digests double-stranded RNA. Involved in the processing of primary rRNA transcript to yield the immediate precursors to the large and small rRNAs (23S and 16S). Also processes some mRNAs, and tRNAs when they are encoded in the rRNA operon. CRISPR (clustered regularly interspaced short palindromic repeat) is an adaptive immune system that provides protection against mobile genetic elements (viruses, transposable elements and conjugative plasmids). CRISPR clusters contain spacers, sequences complementary to antecedent mobile elements, and target invading nucleic acids. CRISPR clusters are transcribed and processed into CRISPR RNA (crRNA). In this organism endogenous ribonuclease 3 and Cas9 are required for correct coprocessing of pre-crRNA and the trans-encoded small RNA (tracrRNA). Cas9, crRNA and tracrRNA are required for cleavage of invading DNA. Complements pre-crRNA and tracrRNA coprocessing defects in an rnc deletion in S.pyogenes strain 370. This chain is Ribonuclease 3, found in Neisseria meningitidis serogroup A / serotype 4A (strain DSM 15465 / Z2491).